A 97-amino-acid polypeptide reads, in one-letter code: MALHNGPRKKTRYKFKKDLRSRGVLPVTRVIQQFELGQKVHIVCEPSIQKGMPHRRFHGKTGSVVGQRGRAWLVEIRDGNKFKTVISRPQHLRAQQF.

This sequence belongs to the eukaryotic ribosomal protein eL21 family.

This chain is Large ribosomal subunit protein eL21, found in Methanospirillum hungatei JF-1 (strain ATCC 27890 / DSM 864 / NBRC 100397 / JF-1).